Reading from the N-terminus, the 676-residue chain is DNA ligase (676 aa).

NAD(+) is bound by residues 34–38 (DAEYD), 84–85 (SL), and E116. K118 (N6-AMP-lysine intermediate) is an active-site residue. NAD(+) contacts are provided by R139, E174, K294, and K318. The Zn(2+) site is built by C412, C415, C428, and C433. One can recognise a BRCT domain in the interval 589–676 (KGGEALKGLT…RTGKKAEELV (88 aa)).

This sequence belongs to the NAD-dependent DNA ligase family. LigA subfamily. It depends on Mg(2+) as a cofactor. The cofactor is Mn(2+).

The enzyme catalyses NAD(+) + (deoxyribonucleotide)n-3'-hydroxyl + 5'-phospho-(deoxyribonucleotide)m = (deoxyribonucleotide)n+m + AMP + beta-nicotinamide D-nucleotide.. In terms of biological role, DNA ligase that catalyzes the formation of phosphodiester linkages between 5'-phosphoryl and 3'-hydroxyl groups in double-stranded DNA using NAD as a coenzyme and as the energy source for the reaction. It is essential for DNA replication and repair of damaged DNA. The polypeptide is DNA ligase (Thermus thermophilus (strain ATCC BAA-163 / DSM 7039 / HB27)).